Here is a 441-residue protein sequence, read N- to C-terminus: Lysine histidine transporter 2 (441 aa).

At Met-1 to Lys-32 the chain is on the cytoplasmic side. The chain crosses the membrane as a helical span at residues Trp-33–Pro-53. Over Tyr-54–Asn-58 the chain is Extracellular. A helical membrane pass occupies residues Leu-59–Leu-79. Topologically, residues Trp-80–Gly-110 are cytoplasmic. A helical transmembrane segment spans residues Leu-111–Val-131. The Extracellular segment spans residues Thr-132–Arg-152. A helical membrane pass occupies residues Thr-153–Phe-173. The Cytoplasmic portion of the chain corresponds to Asn-174–Ser-175. Residues Ile-176–Ala-196 traverse the membrane as a helical segment. Over Ala-197 to Asn-222 the chain is Extracellular. Residues Phe-223–Ile-243 traverse the membrane as a helical segment. At Gln-244–Val-263 the chain is on the cytoplasmic side. Residues Ile-264 to Ile-284 traverse the membrane as a helical segment. Residues Phe-285 to Pro-300 lie on the Extracellular side of the membrane. Residues Ile-301–Ile-321 traverse the membrane as a helical segment. Residues Phe-322–Arg-347 lie on the Cytoplasmic side of the membrane. The chain crosses the membrane as a helical span at residues Phe-348–Gly-370. Over Leu-371–Gly-373 the chain is Extracellular. A helical transmembrane segment spans residues Phe-374–Lys-396. Residues Lys-397–Thr-406 lie on the Cytoplasmic side of the membrane. The chain crosses the membrane as a helical span at residues Ala-407–Leu-427. Over Arg-428–Ser-441 the chain is Extracellular.

It belongs to the amino acid/polyamine transporter 2 family. Amino acid/auxin permease (AAAP) (TC 2.A.18.2) subfamily. As to expression, expressed in flower buds and to lower levels in leaves and stems. Not detected in roots and siliques. Restricted to the tapetum cell layer.

The protein resides in the cell membrane. With respect to regulation, inhibited by diethylstibestrol (DES), 2,4-dinitrophenol (DNP) and carbonlycyanide m-chlorophenylhydrazone (CCCP). In terms of biological role, amino acid-proton symporter. Transporter with a broad specificity for neutral and acidic amino acids. Basic amino acids are only marginally transported. Involved in import of amino acids into the tapetum cells for synthesis of compounds important for microspore structure. In Arabidopsis thaliana (Mouse-ear cress), this protein is Lysine histidine transporter 2 (LHT2).